Consider the following 142-residue polypeptide: Large ribosomal subunit protein uL13 (142 aa).

The protein belongs to the universal ribosomal protein uL13 family. Part of the 50S ribosomal subunit.

Its function is as follows. This protein is one of the early assembly proteins of the 50S ribosomal subunit, although it is not seen to bind rRNA by itself. It is important during the early stages of 50S assembly. The polypeptide is Large ribosomal subunit protein uL13 (Agathobacter rectalis (strain ATCC 33656 / DSM 3377 / JCM 17463 / KCTC 5835 / VPI 0990) (Eubacterium rectale)).